Reading from the N-terminus, the 436-residue chain is Trigger factor (436 aa).

The region spanning 164–249 is the PPIase FKBP-type domain; the sequence is GDTVVIDYKG…IHEIKEKQLP (86 aa).

It belongs to the FKBP-type PPIase family. Tig subfamily.

It localises to the cytoplasm. The catalysed reaction is [protein]-peptidylproline (omega=180) = [protein]-peptidylproline (omega=0). In terms of biological role, involved in protein export. Acts as a chaperone by maintaining the newly synthesized protein in an open conformation. Functions as a peptidyl-prolyl cis-trans isomerase. The chain is Trigger factor from Limosilactobacillus reuteri (strain DSM 20016) (Lactobacillus reuteri).